The primary structure comprises 577 residues: Moesin (577 aa).

The FERM domain occupies 2–295 (PKTINVRVTT…GNHELYMRRR (294 aa)). At serine 74 the chain carries Phosphoserine. Lysine 79 carries the N6-acetyllysine modification. At lysine 83 the chain carries N6-succinyllysine. A [IL]-x-C-x-x-[DE] motif motif is present at residues 115–120 (IYCPPE). Tyrosine 116 carries the phosphotyrosine modification. S-nitrosocysteine is present on cysteine 117. N6-acetyllysine is present on residues lysine 139 and lysine 165. The segment covering 376–414 (EQERKRAQSEAEKLAKERQEAEEAKEALLKASRDQKKTQ) has biased composition (basic and acidic residues). Disordered stretches follow at residues 376 to 415 (EQERKRAQSEAEKLAKERQEAEEAKEALLKASRDQKKTQE) and 434 to 518 (ARQK…NERV). Serine 407 carries the post-translational modification Phosphoserine. Acidic residues predominate over residues 476 to 487 (AENDQDEQDENG). The segment covering 492-518 (ADLRADAMAKDRSEEERTTEAEKNERV) has biased composition (basic and acidic residues). Phosphoserine is present on serine 527. Threonine 558 bears the Phosphothreonine; by ROCK2 and STK10 mark.

In terms of assembly, binds NHERF1. In resting T-cells, part of a PAG1-NHERF1-MSN complex which is disrupted upon TCR activation. Interacts with PPP1R16B. Interacts with PDZD8. Interacts with SELPLG and SYK; mediates the activation of SYK by SELPLG. Interacts with PDPN (via cytoplasmic domain); activates RHOA and promotes epithelial-mesenchymal transition. Interacts with SPN/CD43 cytoplasmic tail, CD44 and ICAM2. Phosphorylation on Thr-558 is crucial for the formation of microvilli-like structures. Phosphorylation by ROCK2 suppresses the head-to-tail association of the N-terminal and C-terminal halves resulting in an opened conformation which is capable of actin and membrane-binding. Phosphorylation on Thr-558 by STK10 negatively regulates lymphocyte migration and polarization. In terms of processing, S-nitrosylation of Cys-117 is induced by interferon-gamma and oxidatively-modified low-densitity lipoprotein (LDL(ox)) implicating the iNOS-S100A8/9 transnitrosylase complex.

It localises to the cell membrane. Its subcellular location is the cytoplasm. It is found in the cytoskeleton. The protein resides in the apical cell membrane. The protein localises to the cell projection. It localises to the microvillus membrane. Its subcellular location is the microvillus. Its activity is regulated as follows. A head-to-tail association, of the N-terminal and C-terminal halves results in a closed conformation (inactive form) which is incapable of actin or membrane-binding. In terms of biological role, probably involved in connections of major cytoskeletal structures to the plasma membrane. Plays a role in regulating the proliferation, migration, and adhesion of human lymphoid cells and participates in immunologic synapse formation. This chain is Moesin, found in Sus scrofa (Pig).